We begin with the raw amino-acid sequence, 471 residues long: Venom prothrombin activator vestarin-D2 (471 aa).

Positions 1–20 (MAPQLLLCLILTFLWSLPEA) are cleaved as a signal peptide. The propeptide occupies 21–40 (ESNVFLKSNVANRFLQRTKR). A Gla domain is found at 41–86 (ANSIFEEIRPGNIERECVEEKCSKEEAREVFQDNEKTEAFWTVYVD). 4-carboxyglutamate is present on residues E46, E47, E54, E56, E59, E60, E65, E66, E69, and E75. C57 and C62 are oxidised to a cystine. Residues 86-122 (DGDQCLSNPCHYRGTCKDGIGSYTCTCLPGYEGKNCE) enclose the EGF-like 1; calcium-binding domain. 10 disulfides stabilise this stretch: C90–C101, C95–C110, C112–C121, C129–C140, C136–C149, C151–C164, C172–C333, C233–C238, C381–C395, and C406–C434. An O-linked (Hex...) serine glycan is attached at S92. The EGF-like 2 domain occupies 129 to 164 (CRLFNGNCWHFCKTVQNDTQCSCAEGYRLGVDGFSC). Positions 182–226 (REASLPDFHFSDDYDAIDENNLVETVQSQSATLLKKSDNPSPDIR) are cleaved as a propeptide — activation peptide. The Peptidase S1 domain maps to 227 to 458 (IVSGLDCKLG…FIPWIKTIMR (232 aa)). Catalysis depends on H268, which acts as the Charge relay system. A glycan (N-linked (GlcNAc...) asparagine) is linked at N271. D313 functions as the Charge relay system in the catalytic mechanism. S410 acts as the Charge relay system in catalysis.

This sequence belongs to the peptidase S1 family. Snake venom subfamily. As to quaternary structure, heterodimer of a light chain and a heavy chain; disulfide-linked. The vitamin K-dependent, enzymatic carboxylation of some glutamate residues allows the modified protein to bind calcium. As to expression, expressed by the venom gland.

Its subcellular location is the secreted. The catalysed reaction is Selective cleavage of Arg-|-Thr and then Arg-|-Ile bonds in prothrombin to form thrombin.. Snake prothrombin activator that attacks the hemostatic system of prey. This protein is functionally similar to blood coagulation factor Xa. In Demansia vestigiata (Lesser black whip snake), this protein is Venom prothrombin activator vestarin-D2.